Consider the following 426-residue polypeptide: CAAX prenyl protease 1 homolog (426 aa).

Residues 1–3 (MVN) lie on the Lumenal side of the membrane. A helical membrane pass occupies residues 4 to 24 (YFIISISFFLLEHFYSFYLNF). The Cytoplasmic portion of the chain corresponds to 25–70 (RQSKLLKNLTKVPEYCKDRITQEDFKKSQEYSKAKLDYKTLTSTIQ). Residues 71 to 91 (VLTTLLSFYYPVYPYFWNLSL) form a helical membrane-spanning segment. At 92-106 (ELAEKIGYPNEIIRS) the chain is on the lumenal side. The helical transmembrane segment at 107-127 (CFFFAFTVGVSVITEIPFSYY) threads the bilayer. Residues 128–150 (YQFILEEKFGYNRMTRTLFIKDK) are Cytoplasmic-facing. The helical transmembrane segment at 151–171 (IISTLLMIGFGLPILSLAIFI) threads the bilayer. Residues 172–178 (INWSGPQ) are Lumenal-facing. The chain crosses the membrane as a helical span at residues 179–199 (LWFYCWLLLVAITLLSITIYP). The Cytoplasmic portion of the chain corresponds to 200 to 294 (TFIQPLFNKF…GHYKMSHTLK (95 aa)). Histidine 282 contributes to the Zn(2+) binding site. The active site involves glutamate 283. Histidine 286 serves as a coordination point for Zn(2+). The helical transmembrane segment at 295–315 (QMLLVQVHLVTLLYAFSLLIN) threads the bilayer. Residues 316–333 (DDQLYQQFGFVSSKDSVL) lie on the Lumenal side of the membrane. A helical membrane pass occupies residues 334–354 (VGLTLFMFLYSPIDRIFSLLI). Residues 355-426 (NIFSRKYEFQ…KVALYKLKNK (72 aa)) lie on the Cytoplasmic side of the membrane. Residue glutamate 362 coordinates Zn(2+).

Belongs to the peptidase M48B family. Requires Zn(2+) as cofactor.

Its subcellular location is the endoplasmic reticulum membrane. It carries out the reaction Hydrolyzes the peptide bond -P2-(S-farnesyl or geranylgeranyl)C-P1'-P2'-P3'-COOH where P1' and P2' are amino acids with aliphatic side chains and P3' is any C-terminal residue.. Proteolytically removes the C-terminal three residues of farnesylated proteins. The protein is CAAX prenyl protease 1 homolog (zmpste24) of Dictyostelium discoideum (Social amoeba).